The primary structure comprises 494 residues: MGTTKVTAPLIFAISVATIGSFQFGYNTGVINAPEAIIKDFLNYTLEERSEPPPSSVLLTSLWSLSVAIFSVGGMIGSFSVGLFVNRFGRGNSMLIVNLLAIAGGCLMGFCKIAESVEMLILGRLIIGLFCGLCTGFVPMYIGEISPTALRGAFGTLNQLGIVIGILVAQIFGLKVILGTEDLWPLLLGFTILPAIIQCAALPFCPESPRFLLINRKEEEKAKEILQRLWGTEDVAQDIQEMKDESMRMSQEKQVTVLELFRAPNYRQPIIISIMLQLSQQLSGINAVFYYSTGIFKDAGVQEPVYATIGAGVVNTIFTVVSVFLVERAGRRTLHLIGLGGMAFCSILMTISLLLKDNYSWMSFICIGAILVFVAFFEIGPGPIPWFIVAELFGQGPRPAAMAVAGCSNWTSNFLVGLLFPSAAFYLGAYVFIVFTVFLVIFWVFTFFKVPETRGRTFEEITRAFEGQTQTGTRGEKGPIMEMNSIQPTKDTNA.

Over 1 to 10 (MGTTKVTAPL) the chain is Cytoplasmic. The helical transmembrane segment at 11 to 32 (IFAISVATIGSFQFGYNTGVIN) threads the bilayer. At 33–64 (APEAIIKDFLNYTLEERSEPPPSSVLLTSLWS) the chain is on the extracellular side. Asn43 is a glycosylation site (N-linked (GlcNAc...) asparagine). The chain crosses the membrane as a helical span at residues 65-85 (LSVAIFSVGGMIGSFSVGLFV). The Cytoplasmic segment spans residues 86–90 (NRFGR). A helical transmembrane segment spans residues 91 to 111 (GNSMLIVNLLAIAGGCLMGFC). The Extracellular portion of the chain corresponds to 112–118 (KIAESVE). Residues 119–142 (MLILGRLIIGLFCGLCTGFVPMYI) form a helical membrane-spanning segment. At 143–153 (GEISPTALRGA) the chain is on the cytoplasmic side. A helical transmembrane segment spans residues 154–174 (FGTLNQLGIVIGILVAQIFGL). D-glucose is bound at residue Gln159. Residues 175 to 183 (KVILGTEDL) are Extracellular-facing. Residues 184–204 (WPLLLGFTILPAIIQCAALPF) form a helical membrane-spanning segment. The Cytoplasmic segment spans residues 205–269 (CPESPRFLLI…LFRAPNYRQP (65 aa)). Position 232 is a phosphothreonine (Thr232). Residues 270 to 290 (IIISIMLQLSQQLSGINAVFY) traverse the membrane as a helical segment. An important for selectivity against fructose region spans residues 277–279 (QLS). D-glucose-binding positions include 280–281 (QQ) and Asn286. Over 291–304 (YSTGIFKDAGVQEP) the chain is Extracellular. The chain crosses the membrane as a helical span at residues 305 to 325 (VYATIGAGVVNTIFTVVSVFL). Asn315 contacts D-glucose. Topologically, residues 326-331 (VERAGR) are cytoplasmic. Residues 332-352 (RTLHLIGLGGMAFCSILMTIS) traverse the membrane as a helical segment. At 353-363 (LLLKDNYSWMS) the chain is on the extracellular side. Asn358 is a glycosylation site (N-linked (GlcNAc...) asparagine). A helical transmembrane segment spans residues 364-389 (FICIGAILVFVAFFEIGPGPIPWFIV). D-glucose-binding residues include Glu378 and Trp386. The Cytoplasmic portion of the chain corresponds to 390–399 (AELFGQGPRP). Residues 400–420 (AAMAVAGCSNWTSNFLVGLLF) form a helical membrane-spanning segment. Topologically, residues 421–429 (PSAAFYLGA) are extracellular. A helical membrane pass occupies residues 430 to 450 (YVFIVFTVFLVIFWVFTFFKV). The Cytoplasmic portion of the chain corresponds to 451–494 (PETRGRTFEEITRAFEGQTQTGTRGEKGPIMEMNSIQPTKDTNA). Positions 469–494 (TQTGTRGEKGPIMEMNSIQPTKDTNA) are disordered. Polar residues predominate over residues 484-494 (NSIQPTKDTNA). Ser485 is subject to Phosphoserine. At Thr492 the chain carries Phosphothreonine.

The protein belongs to the major facilitator superfamily. Sugar transporter (TC 2.A.1.1) family. Glucose transporter subfamily. As to quaternary structure, interacts with SMIM43; the interaction may promote SLC2A1-mediated glucose transport to meet the energy needs of mesendoderm differentiation.

Its subcellular location is the cell membrane. The protein localises to the perikaryon. It is found in the cell projection. The catalysed reaction is D-glucose(out) = D-glucose(in). It catalyses the reaction D-galactose(in) = D-galactose(out). Deoxyglucose transport is inhibited by D-glucose, D-galactose and maltose. Galactose transport is inhibited by D-glucose and maltose. Its function is as follows. Facilitative glucose transporter. Can also mediate the uptake of various other monosaccharides across the cell membrane. Mediates the uptake of glucose, 2-deoxyglucose, galactose, mannose, xylose and fucose, and probably also dehydroascorbate. Does not mediate fructose transport. Required for mesendoderm differentiation. In Bos taurus (Bovine), this protein is Solute carrier family 2, facilitated glucose transporter member 3.